Here is a 534-residue protein sequence, read N- to C-terminus: Blue-light-activated protein (534 aa).

Residues 20–93 enclose the PAS domain; it reads GKDIFFAAVE…QSIRDAIAQR (74 aa). S-4a-FMN cysteine is present on Cys70. One can recognise a PAC domain in the interval 94 to 148; sequence NDISAEIINYRKDGSSFWNALFISPVYNDAGDLIYFFASQLDISRRKDAEEALRQ. The Histidine kinase domain maps to 161-390; sequence GIAHDFNNLL…TLRLYFPVDE (230 aa). The residue at position 164 (His164) is a Phosphohistidine; by autocatalysis. The Response regulatory domain occupies 411 to 527; the sequence is RILIVEDRPD…DLARKVRQVL (117 aa). Asp461 is modified (4-aspartylphosphate).

FMN binds covalently to cysteine after exposure to blue light and this bond is spontaneously broken in the dark.

The catalysed reaction is ATP + protein L-histidine = ADP + protein N-phospho-L-histidine.. Functionally, photosensitive kinase and response regulator that is involved in increased bacterial virulence upon exposure to light. This is Blue-light-activated protein from Pseudomonas syringae pv. tomato (strain ATCC BAA-871 / DC3000).